The following is a 271-amino-acid chain: Type III pantothenate kinase (271 aa).

Residue 6–13 coordinates ATP; that stretch reads DVRNTNIV. 109 to 112 serves as a coordination point for substrate; sequence GADR. The Proton acceptor role is filled by Asp111. Residue Asp131 coordinates K(+). Thr134 contributes to the ATP binding site. Thr186 contributes to the substrate binding site.

Belongs to the type III pantothenate kinase family. In terms of assembly, homodimer. NH4(+) is required as a cofactor. It depends on K(+) as a cofactor.

It localises to the cytoplasm. It carries out the reaction (R)-pantothenate + ATP = (R)-4'-phosphopantothenate + ADP + H(+). The protein operates within cofactor biosynthesis; coenzyme A biosynthesis; CoA from (R)-pantothenate: step 1/5. Functionally, catalyzes the phosphorylation of pantothenate (Pan), the first step in CoA biosynthesis. This Rhodococcus jostii (strain RHA1) protein is Type III pantothenate kinase.